Consider the following 172-residue polypeptide: S-ribosylhomocysteine lyase (172 aa).

Residues H54, H58, and C128 each coordinate Fe cation.

The protein belongs to the LuxS family. Homodimer. Requires Fe cation as cofactor.

The enzyme catalyses S-(5-deoxy-D-ribos-5-yl)-L-homocysteine = (S)-4,5-dihydroxypentane-2,3-dione + L-homocysteine. Involved in the synthesis of autoinducer 2 (AI-2) which is secreted by bacteria and is used to communicate both the cell density and the metabolic potential of the environment. The regulation of gene expression in response to changes in cell density is called quorum sensing. Catalyzes the transformation of S-ribosylhomocysteine (RHC) to homocysteine (HC) and 4,5-dihydroxy-2,3-pentadione (DPD). In Vibrio alginolyticus, this protein is S-ribosylhomocysteine lyase.